A 196-amino-acid polypeptide reads, in one-letter code: Nucleoside triphosphate pyrophosphatase (196 aa).

The Proton acceptor role is filled by Asp70.

It belongs to the Maf family. A divalent metal cation serves as cofactor.

The protein resides in the cytoplasm. It carries out the reaction a ribonucleoside 5'-triphosphate + H2O = a ribonucleoside 5'-phosphate + diphosphate + H(+). The catalysed reaction is a 2'-deoxyribonucleoside 5'-triphosphate + H2O = a 2'-deoxyribonucleoside 5'-phosphate + diphosphate + H(+). Nucleoside triphosphate pyrophosphatase. May have a dual role in cell division arrest and in preventing the incorporation of modified nucleotides into cellular nucleic acids. The polypeptide is Nucleoside triphosphate pyrophosphatase (Gloeothece citriformis (strain PCC 7424) (Cyanothece sp. (strain PCC 7424))).